Reading from the N-terminus, the 586-residue chain is Proton channel OTOP1 (586 aa).

Residues 1–52 (MVEHGGTDSMWLNKYNPAAASSASSSSSSDAENKLFSRLKVSLTKKYPQKNA) lie on the Cytoplasmic side of the membrane. A helical transmembrane segment spans residues 53–74 (ELLSAQYGTNLLLLGVSVMLAL). The Extracellular portion of the chain corresponds to 75-82 (AAQSGPVK). Residues 83-106 (EEHLLSFITVLMLVQLVWMLCYMI) form a helical membrane-spanning segment. At 107-124 (RRERERSPVPERDAHAGA) the chain is on the cytoplasmic side. A helical membrane pass occupies residues 125-147 (SWIRGGLTMLALLSLIMDAFRIG). Topologically, residues 148-157 (YFVGYHSCIS) are extracellular. The chain crosses the membrane as a helical span at residues 158–182 (AALGVYPIVHALHTISQVHFLWFHI). Topologically, residues 183–190 (KDVIKKYE) are cytoplasmic. The chain crosses the membrane as a helical span at residues 191-217 (TFERFGVIHAVFTNLLLWCNGVMSETE). The Extracellular portion of the chain corresponds to 218–255 (HFMHNHRRRLIEMGYANLSTVDVQPHCNCTTSVCSMFS). Residues 256–281 (TSLYYLYPFNIEYHIFVSAMLFVMWK) form a helical membrane-spanning segment. Residues 282-303 (NIGRTLDRHSNRKRRSTGSTGL) lie on the Cytoplasmic side of the membrane. A helical membrane pass occupies residues 304-326 (LLGPLGGLVALASSVSVLVVYLI). The Extracellular portion of the chain corresponds to 327–336 (HLEKTEEMHE). The chain crosses the membrane as a helical span at residues 337 to 362 (AAVSMFYYYGVAMMACMCVGSGTGLL). Topologically, residues 363 to 380 (VYRMENRPMDTGSNPART) are cytoplasmic. A helical transmembrane segment spans residues 381–405 (LDTELLLASSLGSWLMSWCSVVASV). Over 406 to 417 (AEAGQKSPSFSW) the chain is Extracellular. A helical transmembrane segment spans residues 418–438 (TSLTYSLLLVLEKCIQNLFIV). At 439 to 518 (ESLYRRHSEE…TPGRKRQILK (80 aa)) the chain is on the cytoplasmic side. The tract at residues 484–505 (PAAGSHALSRKQPDAPLPAGQR) is disordered. The helical transmembrane segment at 519–537 (NICMFLFMCNISLWILPAF) threads the bilayer. Topologically, residues 538 to 555 (GCRPQYDNPLENETFGTS) are extracellular. The chain crosses the membrane as a helical span at residues 556-579 (VWTTVLNVAIPLNLFYRMHSVASL). At 580–586 (FEVFRKV) the chain is on the cytoplasmic side.

This sequence belongs to the otopetrin family. Homodimer.

Its subcellular location is the cell membrane. The protein resides in the cell projection. It is found in the microvillus. The enzyme catalyses H(+)(in) = H(+)(out). Its activity is regulated as follows. Activated by both acid and alkali, with proton influx in response to extracellular acid and proton efflux during alkali stimulation. Inhibited by Zn(2+); this inhibition is thought to be pH-sensitive. Currents evoked in response to mild acid (pH 6.0) stimulus may also be mildly potentiated by exposure to Zn(2+). Activated by NH(4)Cl. Its function is as follows. Proton-selective ion channel. Biphasically modulated by acid and alkali, mediating proton influx and efflux in response to extracellular acid and base stimulation, respectively. May be involved in acid and base perception. Sensor for ammonium chloride (NH(4)Cl) in taste receptor cells. NH(4)Cl acts by increasing the intracellular pH, thereby generating a driving force for proton entry through OTOP1 channel. Plays a role in the regulation of Ca(2+) flux in response to purigenic (ATP, ADP and UDP) stimuli, leading to increase in cytosolic Ca(2+) due to influx of extracellular calcium. May play this role by inhibiting P2Y purinoceptor-mediated Ca(2+) release in a Ca(2+)-dependent manner and promote an influx of Ca(2+) in response to ATP. Through this mechanism and possibly others, plays a role in the formation and function of calcium carbonate-based structures in the vestibular system of the inner ear, called otoconia, that sense gravity and linear acceleration. This is Proton channel OTOP1 from Danio rerio (Zebrafish).